Here is a 103-residue protein sequence, read N- to C-terminus: Large ribosomal subunit protein uL24 (103 aa).

It belongs to the universal ribosomal protein uL24 family. Part of the 50S ribosomal subunit.

In terms of biological role, one of two assembly initiator proteins, it binds directly to the 5'-end of the 23S rRNA, where it nucleates assembly of the 50S subunit. Its function is as follows. One of the proteins that surrounds the polypeptide exit tunnel on the outside of the subunit. This chain is Large ribosomal subunit protein uL24, found in Dehalococcoides mccartyi (strain ATCC BAA-2100 / JCM 16839 / KCTC 5957 / BAV1).